Reading from the N-terminus, the 103-residue chain is Large ribosomal subunit protein bL21 (103 aa).

The protein belongs to the bacterial ribosomal protein bL21 family. As to quaternary structure, part of the 50S ribosomal subunit. Contacts protein L20.

This protein binds to 23S rRNA in the presence of protein L20. This Wolinella succinogenes (strain ATCC 29543 / DSM 1740 / CCUG 13145 / JCM 31913 / LMG 7466 / NCTC 11488 / FDC 602W) (Vibrio succinogenes) protein is Large ribosomal subunit protein bL21.